Reading from the N-terminus, the 228-residue chain is Orotidine 5'-phosphate decarboxylase (228 aa).

Substrate is bound by residues Asp8, Lys30, 59 to 68 (DLKLHDIPNT), Thr118, Arg178, Gln187, Gly207, and Arg208. The Proton donor role is filled by Lys61.

Belongs to the OMP decarboxylase family. Type 1 subfamily. In terms of assembly, homodimer.

The catalysed reaction is orotidine 5'-phosphate + H(+) = UMP + CO2. Its pathway is pyrimidine metabolism; UMP biosynthesis via de novo pathway; UMP from orotate: step 2/2. Its function is as follows. Catalyzes the decarboxylation of orotidine 5'-monophosphate (OMP) to uridine 5'-monophosphate (UMP). The protein is Orotidine 5'-phosphate decarboxylase of Wolinella succinogenes (strain ATCC 29543 / DSM 1740 / CCUG 13145 / JCM 31913 / LMG 7466 / NCTC 11488 / FDC 602W) (Vibrio succinogenes).